The following is a 137-amino-acid chain: Thionin BTH7 (137 aa).

The signal sequence occupies residues 1–28 (MATNKSIKSVVICVLILGLVLEQVQVEG). Intrachain disulfides connect Cys31-Cys68, Cys32-Cys60, Cys40-Cys58, and Cys44-Cys54. Positions 75–137 (LNLLPESGEP…DGEVIQSVEA (63 aa)) are cleaved as a propeptide — acidic domain.

It belongs to the plant thionin (TC 1.C.44) family. 4 C-C subfamily.

The protein resides in the secreted. Its function is as follows. Thionins are small plant proteins which are toxic to animal cells. They seem to exert their toxic effect at the level of the cell membrane. Their precise function is not known. The chain is Thionin BTH7 from Hordeum vulgare (Barley).